The chain runs to 213 residues: Pyridoxine/pyridoxamine 5'-phosphate oxidase (213 aa).

Substrate-binding positions include 8 to 11 (RQEY) and Lys66. Residues 61–66 (RTVLLK), 76–77 (YT), Arg82, Lys83, and Gln105 contribute to the FMN site. Residues Tyr123, Arg127, and Ser131 each contribute to the substrate site. Residues 140 to 141 (QS) and Trp185 each bind FMN. Residue 191–193 (RLH) participates in substrate binding. Position 195 (Arg195) interacts with FMN.

This sequence belongs to the pyridoxamine 5'-phosphate oxidase family. Homodimer. The cofactor is FMN.

The catalysed reaction is pyridoxamine 5'-phosphate + O2 + H2O = pyridoxal 5'-phosphate + H2O2 + NH4(+). The enzyme catalyses pyridoxine 5'-phosphate + O2 = pyridoxal 5'-phosphate + H2O2. Its pathway is cofactor metabolism; pyridoxal 5'-phosphate salvage; pyridoxal 5'-phosphate from pyridoxamine 5'-phosphate: step 1/1. The protein operates within cofactor metabolism; pyridoxal 5'-phosphate salvage; pyridoxal 5'-phosphate from pyridoxine 5'-phosphate: step 1/1. In terms of biological role, catalyzes the oxidation of either pyridoxine 5'-phosphate (PNP) or pyridoxamine 5'-phosphate (PMP) into pyridoxal 5'-phosphate (PLP). This chain is Pyridoxine/pyridoxamine 5'-phosphate oxidase, found in Bacteroides thetaiotaomicron (strain ATCC 29148 / DSM 2079 / JCM 5827 / CCUG 10774 / NCTC 10582 / VPI-5482 / E50).